Here is a 267-residue protein sequence, read N- to C-terminus: uncharacterized protein (267 aa).

The region spanning leucine 17–leucine 248 is the ABC transporter domain. Glycine 53–threonine 60 is an ATP binding site.

It belongs to the ABC transporter superfamily.

This is an uncharacterized protein from Methanocaldococcus jannaschii (strain ATCC 43067 / DSM 2661 / JAL-1 / JCM 10045 / NBRC 100440) (Methanococcus jannaschii).